Reading from the N-terminus, the 216-residue chain is Probable glutamine ABC transporter permease protein GlnM (216 aa).

One can recognise an ABC transmembrane type-1 domain in the interval 17-205; it reads FYHTLLASVI…VLTIPLSIGV (189 aa). Helical transmembrane passes span 21–41, 63–83, 85–105, 132–152, and 181–201; these read LLAS…VAVM, IPLL…GLRL, GFQA…AEAI, LHII…NQFL, and LVVF…TIPL.

It belongs to the binding-protein-dependent transport system permease family. As to quaternary structure, the complex is composed of two ATP-binding proteins (GlnQ), two transmembrane proteins (GlnM and GlnP) and a solute-binding protein (GlnH).

It localises to the cell membrane. Part of the ABC transporter complex GlnHMPQ involved in glutamine transport. Probably responsible for the translocation of the substrate across the membrane. This Bacillus subtilis (strain 168) protein is Probable glutamine ABC transporter permease protein GlnM (glnM).